The primary structure comprises 522 residues: MSLLNCENSCGSSQSESDCCVAMASSCSAATKDDSVGGTASTGNLSSSFMEDIQGYDVEFDPPLESKYECPICLMALREAVQTPCGHRFCKACIIKSIRDAGHKCPVDNEILLENQLFPDNFAKREILSLMVKCPNEGCLHKMELRHLEDHQAHCEFALVDCPQCQRPFQKFHINIHILKDCPRRQVSCDNCAALVAFEDKEIHDQNCPLANVICEYCNTILIREQMPNHYDLDCPTAPIPCTFSTFGCHEKMQRNHLARHLQENTQSHMRMLAQAVHSLSLIPDSGYVSEVRNFQETIHQLEGRLVRQDHQIRELTAKMETQSTYVSELKRTIRTLEDKVAEIEAQQCNGIYIWKIGNFGMHLKCQEEEKPVVIHSPGFYTGKPGYKLCMRLHLQLPTAQRCANYISLFVHTMQGEYDSHLPWPFQGTIRLTILDQSEAPVRQNHEEIMDAKPDLLAFQRPTIPRNPKGFGYVTFMHLEALRQRTFIKDDTLLVRCEVSTRFDMGSLRREGFQPRSTDSGV.

Residues 1–354 (MSLLNCENSC…EAQQCNGIYI (354 aa)) form an interaction with TAX1BP1 region. The RING-type; degenerate zinc-finger motif lies at 70–109 (CPICLMALREAVQTPCGHRFCKACIIKSIRDAGHKCPVDN). A Glycyl lysine isopeptide (Lys-Gly) (interchain with G-Cter in SUMO); alternate cross-link involves residue lysine 124. Lysine 124 is covalently cross-linked (Glycyl lysine isopeptide (Lys-Gly) (interchain with G-Cter in ubiquitin); alternate). A Glycyl lysine isopeptide (Lys-Gly) (interchain with G-Cter in SUMO) cross-link involves residue lysine 142. TRAF-type zinc fingers lie at residues 150-202 (DHQA…EDKE) and 203-259 (IHDQ…NHLA). A coiled-coil region spans residues 288–348 (YVSEVRNFQE…DKVAEIEAQQ (61 aa)). Residue lysine 319 forms a Glycyl lysine isopeptide (Lys-Gly) (interchain with G-Cter in ubiquitin) linkage. One can recognise an MATH domain in the interval 350–499 (NGIYIWKIGN…DDTLLVRCEV (150 aa)). Positions 355–522 (WKIGNFGMHL…FQPRSTDSGV (168 aa)) are interaction with TANK. Lysine 453 is covalently cross-linked (Glycyl lysine isopeptide (Lys-Gly) (interchain with G-Cter in SUMO)).

The protein belongs to the TNF receptor-associated factor family. A subfamily. As to quaternary structure, homotrimer. Homooligomer. N-terminal region is dimeric while C-terminal region is trimeric; maybe providing a mode of oligomerization. Upon IL1B treatment, forms a complex with PELI1, IRAK1, IRAK4 and MYD88; this complex recruits MAP3K7/TAK1, TAB1 and TAB2 to mediate NF-kappa-B activation. Direct binding of SMAD6 to PELI1 prevents the complex formation and hence negatively regulates IL1R-TLR signaling and eventually NF-kappa-B-mediated gene expression. Binds to TNFRSF5/CD40 and TNFRSF11A/RANK. Associates with NGFR, TNFRSF17, IRAK2, IRAK3, RIPK2, MAP3K1, MAP3K5, MAP3K14, CSK, TRAF, TRAF-interacting protein TRIP and TNF receptor associated protein TDP2. Interacts with IL17R. Interacts with SQSTM1 bridging NTRK1 and NGFR. Forms a ternary complex with SQSTM1 and PRKCZ. Interacts with PELI2 and PELI3. Binds UBE2V1. Interacts with TAX1BP1; this interaction mediates deubiquitination of TRAF6 and inhibition of NF-kappa-B activation. Interacts with ZNF675. Interacts with ARRB1 and ARRB2. Interacts with MAP3K7 and TAB1/MAP3K7IP1; during IL-1 signaling. Interacts with UBE2N. Interacts with TGFBR1, HDAC1 and RANGAP1. Interacts with AKT1, AKT2 and AKT3. Interacts (via TRAF domains) with NUMBL (via C-terminal). Interacts with RBCK1. Interacts with LIMD1 (via LIM domains). Interacts with RSAD2/viperin. Interacts (via C-terminus) with EIF2AK2/PKR (via the kinase catalytic domain). Interacts with ZFAND5. Interacts with IL1RL1. Interacts with TRAFD1. Interacts with AJUBA. Interacts with MAVS/IPS1. Interacts (via TRAF domains) with DYNC2I2 (via WD domains). Interacts with IFIT3 (via N-terminus). Interacts with TICAM2. Interacts with CARD14. Interacts with CD40 and MAP3K8; the interaction is required for ERK activation. Interacts with TICAM1 and this interaction is enhanced in the presence of WDFY1. Interacts with TANK; this interaction increases in response to DNA damage. Interacts with USP10; this interaction increases in response to DNA damage. Interacts with ZC3H12A; this interaction increases in response to DNA damage and is stimulated by TANK. Interacts with WDFY3. Interacts with TRIM13. Interacts with GPS2. Interacts (via C-terminus) with SASH1. Interacts with LRRC19. Interacts with IL17RA and TRAF3IP2. Interacts with TOMM70. Interacts with AMBRA1; interaction is required to mediate 'Lys-63'-linked ubiquitination of ULK1. Interacts with CRBN; this interaction inhibits TLR4-mediated signaling by preventing TRAF6-mediated ubiquitination of ECSIT. Post-translationally, sumoylated on Lys-124, Lys-142 and Lys-453 with SUMO1. In terms of processing, polyubiquitinated on Lys-124 by TRAF3IP2; after cell stimulation with IL17A. Polyubiquitinated; after cell stimulation with IL1B or TGFB. This ligand-induced cell stimulation leads to dimerization/oligomerization of TRAF6 molecules, followed by auto-ubiquitination which involves UBE2N and UBE2V1 and leads to TRAF6 activation. This 'Lys-63' site-specific poly-ubiquitination appears to be associated with the activation of signaling molecules. Endogenous autoubiquitination occurs only for the cytoplasmic form. Deubiquitinated by USP10 in a TANK-dependent manner, leading to the negative regulation of NF-kappa-B signaling upon DNA damage. LRRC19 induces 'Lys-63' ubiquitination. Ubiquitinated at Lys-319 by the SCF(FBXL2) complex, leading to its degradation by the proteasome.

Its subcellular location is the cytoplasm. The protein resides in the cell cortex. It localises to the nucleus. The protein localises to the lipid droplet. It catalyses the reaction S-ubiquitinyl-[E2 ubiquitin-conjugating enzyme]-L-cysteine + [acceptor protein]-L-lysine = [E2 ubiquitin-conjugating enzyme]-L-cysteine + N(6)-ubiquitinyl-[acceptor protein]-L-lysine.. Its pathway is protein modification; protein ubiquitination. E3 ubiquitin ligase that, together with UBE2N and UBE2V1, mediates the synthesis of 'Lys-63'-linked-polyubiquitin chains conjugated to proteins, such as ECSIT, IKBKG, IRAK1, AKT1 and AKT2. Also mediates ubiquitination of free/unanchored polyubiquitin chain that leads to MAP3K7 activation. Leads to the activation of NF-kappa-B and JUN. Seems to also play a role in dendritic cells (DCs) maturation and/or activation. Represses c-Myb-mediated transactivation, in B-lymphocytes. Adapter protein that seems to play a role in signal transduction initiated via TNF receptor, IL-1 receptor and IL-17 receptor. Regulates osteoclast differentiation by mediating the activation of adapter protein complex 1 (AP-1) and NF-kappa-B, in response to RANK-L stimulation. Together with MAP3K8, mediates CD40 signals that activate ERK in B-cells and macrophages, and thus may play a role in the regulation of immunoglobulin production. Acts as a regulator of the JNK and NF-kappa-B signaling pathways by initiating assembly of heterotypic 'Lys-63'-/'Lys-48'-linked branched ubiquitin chains that are then recognized by TAB2: TRAF6 catalyzes initial 'Lys-63'-linked-polyubiquitin chains that are then branched via 'Lys-48'-linked polyubiquitin by HUWE1. 'Lys-63'-/'Lys-48'-linked branched ubiquitin chains protect 'Lys-63'-linkages from CYLD deubiquitination. Also participates in the TCR signaling by ubiquitinating LAT. The polypeptide is TNF receptor-associated factor 6 (TRAF6) (Macaca mulatta (Rhesus macaque)).